A 455-amino-acid polypeptide reads, in one-letter code: T-box protein VegT (455 aa).

Positions 57 to 230 (LWAQFHQEGT…HNPFAKGFRE (174 aa)) form a DNA-binding region, T-box. The segment covering 229 to 241 (REQERSHKRDDVL) has biased composition (basic and acidic residues). Disordered stretches follow at residues 229–276 (REQE…RVKE) and 295–360 (ANQG…PDSD). Residues 308–326 (GANQEQQVPSSSSNFYNRN) are compositionally biased toward polar residues.

Forms a repression complex on the promoters of the nodal/nr1 and siamois genes with the maternal factors tcf7l1/tcf3 and pouf5.1/oct-25. Interacts (via C-terminus) with tcf7l1/tcf3 (via N-terminus). Also interacts with the other POU-domain transcription factors pou5f1.2/oct-91 and pou5f1.3/oct-60. Vegetally localized in oocytes and expressed in the presumptive endoderm and mesoderm at early gastrula stage. Expression is down-regulated in the endoderm by the end of gastrulation but maintained in the lateral and ventral mesoderm of the blastopore lip.

Its subcellular location is the nucleus. In terms of biological role, transcription factor required for both mesoderm and endoderm formation in the embryo; signaling determinants and concentration levels may determine which germ layer is formed. Acts together with beta-catenin to activate genes that are responsible for mesoderm induction including wnt-8, eomes t/bra, siamois, mix1 and sox17. Directly binds to promoter DNA. Patterns the mesoderm along the dorsoventral and posterior axis. Activates siamois gene transcription when alone or in combination with beta-catenin, but inhibits siamois transcription in combination with pou5f1.1/oct-25. The protein is T-box protein VegT of Xenopus tropicalis (Western clawed frog).